The primary structure comprises 139 residues: ATP synthase epsilon chain (139 aa).

The protein belongs to the ATPase epsilon chain family. In terms of assembly, F-type ATPases have 2 components, CF(1) - the catalytic core - and CF(0) - the membrane proton channel. CF(1) has five subunits: alpha(3), beta(3), gamma(1), delta(1), epsilon(1). CF(0) has three main subunits: a, b and c.

It localises to the cell inner membrane. Its function is as follows. Produces ATP from ADP in the presence of a proton gradient across the membrane. This Actinobacillus pleuropneumoniae serotype 5b (strain L20) protein is ATP synthase epsilon chain.